The sequence spans 392 residues: Glutamine synthetase (392 aa).

The GS beta-grasp domain occupies 26 to 106 (VQVTYVWIDG…VMCEVLKYNR (81 aa)). In terms of domain architecture, GS catalytic spans 113-392 (LRHTCKKIME…MASPRDAAVF (280 aa)). Position 134 (glutamate 134) interacts with ATP. Mn(2+) contacts are provided by glutamate 134, glutamate 136, glutamate 196, and glutamate 203. 203 to 208 (EFQVGP) lines the ATP pocket. 246–247 (NW) contacts L-glutamate. Residue histidine 253 participates in Mn(2+) binding. ATP-binding positions include 255–257 (NYS), arginine 319, and arginine 324. Arginine 319 contributes to the L-glutamate binding site. Residue 336-338 (YFE) participates in ADP binding. Glutamate 338 provides a ligand contact to Mn(2+). Arginine 340 lines the L-glutamate pocket.

This sequence belongs to the glutamine synthetase family. It depends on Mg(2+) as a cofactor. Requires Mn(2+) as cofactor.

It is found in the cytoplasm. Its subcellular location is the cytosol. It localises to the microsome. The protein resides in the mitochondrion. The catalysed reaction is L-glutamate + NH4(+) + ATP = L-glutamine + ADP + phosphate + H(+). In terms of biological role, glutamine synthetase that catalyzes the ATP-dependent conversion of glutamate and ammonia to glutamine. This chain is Glutamine synthetase, found in Xenopus laevis (African clawed frog).